A 401-amino-acid polypeptide reads, in one-letter code: Argininosuccinate synthase (401 aa).

Position 8 to 16 (8 to 16 (AYSGGLDTS)) interacts with ATP. Residue tyrosine 85 participates in L-citrulline binding. An ATP-binding site is contributed by glycine 115. Residues threonine 117, asparagine 121, and aspartate 122 each coordinate L-aspartate. Asparagine 121 serves as a coordination point for L-citrulline. L-citrulline is bound by residues arginine 125, serine 173, glutamate 258, and tyrosine 270.

This sequence belongs to the argininosuccinate synthase family. Type 1 subfamily. As to quaternary structure, homotetramer.

Its subcellular location is the cytoplasm. The enzyme catalyses L-citrulline + L-aspartate + ATP = 2-(N(omega)-L-arginino)succinate + AMP + diphosphate + H(+). Its pathway is amino-acid biosynthesis; L-arginine biosynthesis; L-arginine from L-ornithine and carbamoyl phosphate: step 2/3. The sequence is that of Argininosuccinate synthase from Staphylococcus aureus (strain MSSA476).